A 605-amino-acid chain; its full sequence is Aspartate--tRNA(Asp/Asn) ligase (605 aa).

An L-aspartate-binding site is contributed by glutamate 172. An aspartate region spans residues 196–199 (QLFK). Arginine 218 is an L-aspartate binding site. Residues 218 to 220 (RDE) and glutamine 227 contribute to the ATP site. Histidine 455 contributes to the L-aspartate binding site. Glutamate 489 is an ATP binding site. Residue arginine 496 participates in L-aspartate binding. 541 to 544 (GLDR) is a binding site for ATP.

It belongs to the class-II aminoacyl-tRNA synthetase family. Type 1 subfamily. In terms of assembly, homodimer.

It localises to the cytoplasm. The enzyme catalyses tRNA(Asx) + L-aspartate + ATP = L-aspartyl-tRNA(Asx) + AMP + diphosphate. Functionally, aspartyl-tRNA synthetase with relaxed tRNA specificity since it is able to aspartylate not only its cognate tRNA(Asp) but also tRNA(Asn). Reaction proceeds in two steps: L-aspartate is first activated by ATP to form Asp-AMP and then transferred to the acceptor end of tRNA(Asp/Asn). The protein is Aspartate--tRNA(Asp/Asn) ligase of Ralstonia nicotianae (strain ATCC BAA-1114 / GMI1000) (Ralstonia solanacearum).